The chain runs to 373 residues: COP9 signalosome complex subunit 5 (373 aa).

The 136-residue stretch at 66-201 folds into the MPN domain; the sequence is CLISRLATTK…IGAFRTLPSK (136 aa). 3 residues coordinate Zn(2+): His147, His149, and Asp160. The short motif at 147 to 160 is the JAMM motif element; sequence HSHPGYGCWLSNID. Positions 289–325 are disordered; the sequence is FTHERSNSISSTSSLTTRHTTDVEMDDQESAQSSLDI. The span at 295-306 shows a compositional bias: low complexity; that stretch reads NSISSTSSLTTR.

The protein belongs to the peptidase M67A family. CSN5 subfamily. Component of the COP9 signalosome (CSN) complex.

Its subcellular location is the cytoplasm. It is found in the nucleus. Functionally, catalytic Component of the COP9 signalosome (CSN) complex that acts as an regulator of the ubiquitin (Ubl) conjugation pathway by mediating the deneddylation of the cullin subunit of SCF-type E3 ubiquitin-protein ligase complexes. The CNS complex is involved in the regulation of the mating pheromone response. The sequence is that of COP9 signalosome complex subunit 5 (RRI1) from Kluyveromyces lactis (strain ATCC 8585 / CBS 2359 / DSM 70799 / NBRC 1267 / NRRL Y-1140 / WM37) (Yeast).